The following is a 255-amino-acid chain: NAD kinase (255 aa).

The active-site Proton acceptor is Asp-44. NAD(+) contacts are provided by residues 44 to 45 (DG), His-49, 114 to 115 (NE), Asp-144, Ala-152, 155 to 160 (SAYNLS), and Gln-216.

This sequence belongs to the NAD kinase family. Requires a divalent metal cation as cofactor.

The protein localises to the cytoplasm. The enzyme catalyses NAD(+) + ATP = ADP + NADP(+) + H(+). Involved in the regulation of the intracellular balance of NAD and NADP, and is a key enzyme in the biosynthesis of NADP. Catalyzes specifically the phosphorylation on 2'-hydroxyl of the adenosine moiety of NAD to yield NADP. This Rickettsia conorii (strain ATCC VR-613 / Malish 7) protein is NAD kinase.